A 545-amino-acid polypeptide reads, in one-letter code: Alpha-galactosidase A (545 aa).

The signal sequence occupies residues 1–31 (MIQGLESIMNQGTKRILLAATLAATPWQVYG). A disulfide bond links Cys-54 and Cys-86. Residues Asn-57, Asn-95, Asn-101, and Asn-131 are each glycosylated (N-linked (GlcNAc...) asparagine). A disulfide bridge links Cys-134 with Cys-164. The Nucleophile role is filled by Asp-162. N-linked (GlcNAc...) asparagine glycosylation occurs at Asn-211. The active-site Proton donor is the Asp-220. N-linked (GlcNAc...) asparagine glycosylation is found at Asn-363 and Asn-444. Residues 421-518 (CSSVVPTGLV…KNAKTDGCLT (98 aa)) enclose the Ricin B-type lectin domain. Disulfide bonds link Cys-438–Cys-452 and Cys-477–Cys-490.

The protein belongs to the glycosyl hydrolase 27 family. A C-terminal Ser/Thr-rich region may provide possible sites for O-glycosylation.

The protein resides in the secreted. The enzyme catalyses Hydrolysis of terminal, non-reducing alpha-D-galactose residues in alpha-D-galactosides, including galactose oligosaccharides, galactomannans and galactolipids.. In terms of biological role, hydrolyzes a variety of simple alpha-D-galactoside as well as more complex molecules such as oligosaccharides and polysaccharides. This Aspergillus niger protein is Alpha-galactosidase A (aglA).